We begin with the raw amino-acid sequence, 675 residues long: UvrABC system protein B (675 aa).

The Helicase ATP-binding domain maps to 32-417; that stretch reads EGLSDGLAYQ…EHAGQVVEQV (386 aa). 45-52 contributes to the ATP binding site; that stretch reads GVTGSGKT. Positions 98–121 match the Beta-hairpin motif; sequence YYDYYQPEAYVPSRDLFIEKDSAI. The Helicase C-terminal domain maps to 436-602; it reads QVDDLMSEIN…QIKKQVKDII (167 aa). A UVR domain is found at 634 to 669; the sequence is IKEIAKLEKAMQQAARDLQFEEAAVLRDRIRNIKEN.

This sequence belongs to the UvrB family. Forms a heterotetramer with UvrA during the search for lesions. Interacts with UvrC in an incision complex.

The protein resides in the cytoplasm. Its function is as follows. The UvrABC repair system catalyzes the recognition and processing of DNA lesions. A damage recognition complex composed of 2 UvrA and 2 UvrB subunits scans DNA for abnormalities. Upon binding of the UvrA(2)B(2) complex to a putative damaged site, the DNA wraps around one UvrB monomer. DNA wrap is dependent on ATP binding by UvrB and probably causes local melting of the DNA helix, facilitating insertion of UvrB beta-hairpin between the DNA strands. Then UvrB probes one DNA strand for the presence of a lesion. If a lesion is found the UvrA subunits dissociate and the UvrB-DNA preincision complex is formed. This complex is subsequently bound by UvrC and the second UvrB is released. If no lesion is found, the DNA wraps around the other UvrB subunit that will check the other stand for damage. This Neisseria gonorrhoeae protein is UvrABC system protein B.